The sequence spans 182 residues: MPLLNSLATPYADALLQVTDVRQESEEVANQCKDLLSAWESSEPLRDAMTSPVLEPEAKKKALTSLLSEQVTPSLMNLLKVLADRQRLPALEAVLLRYLELYRESRNIALAHVRAAQPLTEEQQAALTTKVQSMAGTNAVEIDLKVDPSLIGGFVVNLGSQVIDASLSGQVRRLGLALAKAS.

Belongs to the ATPase delta chain family. F-type ATPases have 2 components, F(1) - the catalytic core - and F(0) - the membrane proton channel. F(1) has five subunits: alpha(3), beta(3), gamma(1), delta(1), epsilon(1). CF(0) has four main subunits: a(1), b(1), b'(1) and c(10-14). The alpha and beta chains form an alternating ring which encloses part of the gamma chain. F(1) is attached to F(0) by a central stalk formed by the gamma and epsilon chains, while a peripheral stalk is formed by the delta, b and b' chains.

It is found in the cellular thylakoid membrane. F(1)F(0) ATP synthase produces ATP from ADP in the presence of a proton or sodium gradient. F-type ATPases consist of two structural domains, F(1) containing the extramembraneous catalytic core and F(0) containing the membrane proton channel, linked together by a central stalk and a peripheral stalk. During catalysis, ATP synthesis in the catalytic domain of F(1) is coupled via a rotary mechanism of the central stalk subunits to proton translocation. Its function is as follows. This protein is part of the stalk that links CF(0) to CF(1). It either transmits conformational changes from CF(0) to CF(1) or is implicated in proton conduction. This is ATP synthase subunit delta from Synechococcus sp. (strain CC9311).